Consider the following 119-residue polypeptide: Defensin-like protein 260 (119 aa).

Positions 1–24 are cleaved as a signal peptide; it reads MKIASLKLLLLVSLLFAVTQNGIS. 4 disulfides stabilise this stretch: C44/C99, C63/C79, C69/C83, and C73/C85.

The protein belongs to the DEFL family.

The protein resides in the secreted. This chain is Defensin-like protein 260, found in Arabidopsis thaliana (Mouse-ear cress).